The chain runs to 921 residues: GPI ethanolamine phosphate transferase 1 (921 aa).

Residues 37–57 (PGHVALIAGLYEDVSAVTTGW) form a helical membrane-spanning segment. N-linked (GlcNAc...) asparagine glycans are attached at residues asparagine 69 and asparagine 132. Transmembrane regions (helical) follow at residues 386 to 406 (ALIT…VIDL), 418 to 438 (TLIG…SFAI), 441 to 461 (SPLT…EVYA), 483 to 503 (FVSL…LALG), 509 to 529 (ILTI…FSFL), 533 to 553 (MALS…TLLP), 561 to 581 (VNMI…YLIL), 606 to 626 (LVGI…SSAL), 640 to 660 (VMGW…RAKP), and 679 to 699 (FVIL…AVLV). The interval 715 to 737 (SANGAARSAPSPAKPHNLETSQT) is disordered. 4 helical membrane passes run 752-772 (VALF…NVAS), 795-815 (AMLI…LGIL), 825-845 (ALFM…FWVV), and 862-882 (VIAS…AMFI).

It belongs to the PIGG/PIGN/PIGO family. PIGN subfamily.

It is found in the endoplasmic reticulum membrane. The protein operates within glycolipid biosynthesis; glycosylphosphatidylinositol-anchor biosynthesis. In terms of biological role, ethanolamine phosphate transferase involved in glycosylphosphatidylinositol-anchor biosynthesis. Transfers ethanolamine phosphate to the first alpha-1,4-linked mannose of the glycosylphosphatidylinositol precursor of GPI-anchor. The chain is GPI ethanolamine phosphate transferase 1 (MCD4) from Chaetomium globosum (strain ATCC 6205 / CBS 148.51 / DSM 1962 / NBRC 6347 / NRRL 1970) (Soil fungus).